Here is a 227-residue protein sequence, read N- to C-terminus: Cytochrome c oxidase subunit 2 (227 aa).

At 1 to 14 (MAYPLQLGLQDATS) the chain is on the mitochondrial intermembrane side. A helical transmembrane segment spans residues 15–45 (PIMEELMNFHDHTLMIVFLISSLVLYIISLM). Over 46–59 (LTTKLTHTSTMDAQ) the chain is Mitochondrial matrix. A helical transmembrane segment spans residues 60–87 (EVETIWTILPAVILIMIALPSLRILYMM). At 88–227 (DEINNPVLTV…HFENWSASMI (140 aa)) the chain is on the mitochondrial intermembrane side. Positions 161, 196, 198, 200, 204, and 207 each coordinate Cu cation. Residue glutamate 198 coordinates Mg(2+).

This sequence belongs to the cytochrome c oxidase subunit 2 family. In terms of assembly, component of the cytochrome c oxidase (complex IV, CIV), a multisubunit enzyme composed of 14 subunits. The complex is composed of a catalytic core of 3 subunits MT-CO1, MT-CO2 and MT-CO3, encoded in the mitochondrial DNA, and 11 supernumerary subunits COX4I, COX5A, COX5B, COX6A, COX6B, COX6C, COX7A, COX7B, COX7C, COX8 and NDUFA4, which are encoded in the nuclear genome. The complex exists as a monomer or a dimer and forms supercomplexes (SCs) in the inner mitochondrial membrane with NADH-ubiquinone oxidoreductase (complex I, CI) and ubiquinol-cytochrome c oxidoreductase (cytochrome b-c1 complex, complex III, CIII), resulting in different assemblies (supercomplex SCI(1)III(2)IV(1) and megacomplex MCI(2)III(2)IV(2)). Found in a complex with TMEM177, COA6, COX18, COX20, SCO1 and SCO2. Interacts with TMEM177 in a COX20-dependent manner. Interacts with COX20. Interacts with COX16. Requires Cu cation as cofactor.

The protein resides in the mitochondrion inner membrane. It catalyses the reaction 4 Fe(II)-[cytochrome c] + O2 + 8 H(+)(in) = 4 Fe(III)-[cytochrome c] + 2 H2O + 4 H(+)(out). Component of the cytochrome c oxidase, the last enzyme in the mitochondrial electron transport chain which drives oxidative phosphorylation. The respiratory chain contains 3 multisubunit complexes succinate dehydrogenase (complex II, CII), ubiquinol-cytochrome c oxidoreductase (cytochrome b-c1 complex, complex III, CIII) and cytochrome c oxidase (complex IV, CIV), that cooperate to transfer electrons derived from NADH and succinate to molecular oxygen, creating an electrochemical gradient over the inner membrane that drives transmembrane transport and the ATP synthase. Cytochrome c oxidase is the component of the respiratory chain that catalyzes the reduction of oxygen to water. Electrons originating from reduced cytochrome c in the intermembrane space (IMS) are transferred via the dinuclear copper A center (CU(A)) of subunit 2 and heme A of subunit 1 to the active site in subunit 1, a binuclear center (BNC) formed by heme A3 and copper B (CU(B)). The BNC reduces molecular oxygen to 2 water molecules using 4 electrons from cytochrome c in the IMS and 4 protons from the mitochondrial matrix. The chain is Cytochrome c oxidase subunit 2 (MT-CO2) from Zelotomys hildegardeae (Hildegarde's broad-headed mouse).